A 54-amino-acid chain; its full sequence is Small ribosomal subunit protein uS14 (54 aa).

The Zn(2+) site is built by cysteine 19, cysteine 22, cysteine 37, and cysteine 40.

This sequence belongs to the universal ribosomal protein uS14 family. Zinc-binding uS14 subfamily. In terms of assembly, part of the 30S ribosomal subunit. Zn(2+) serves as cofactor.

Functionally, binds 16S rRNA, required for the assembly of 30S particles. This is Small ribosomal subunit protein uS14 from Sulfolobus acidocaldarius (strain ATCC 33909 / DSM 639 / JCM 8929 / NBRC 15157 / NCIMB 11770).